Reading from the N-terminus, the 61-residue chain is Protein translocase subunit SecE (61 aa).

A helical transmembrane segment spans residues 39–59 (LGIILIGLIGMLIRIMGILVL).

This sequence belongs to the SecE/SEC61-gamma family. As to quaternary structure, component of the Sec protein translocase complex. Heterotrimer consisting of SecY (alpha), SecG (beta) and SecE (gamma) subunits. The heterotrimers can form oligomers, although 1 heterotrimer is thought to be able to translocate proteins. Interacts with the ribosome. May interact with SecDF, and other proteins may be involved.

It is found in the cell membrane. Functionally, essential subunit of the Sec protein translocation channel SecYEG. Clamps together the 2 halves of SecY. May contact the channel plug during translocation. This is Protein translocase subunit SecE from Pyrococcus abyssi (strain GE5 / Orsay).